The chain runs to 318 residues: CRISPR-associated endonuclease Cas1 1 (318 aa).

Glutamate 157, histidine 222, and glutamate 237 together coordinate Mn(2+).

This sequence belongs to the CRISPR-associated endonuclease Cas1 family. In terms of assembly, homodimer, forms a heterotetramer with a Cas2 homodimer. Mg(2+) serves as cofactor. Mn(2+) is required as a cofactor.

CRISPR (clustered regularly interspaced short palindromic repeat), is an adaptive immune system that provides protection against mobile genetic elements (viruses, transposable elements and conjugative plasmids). CRISPR clusters contain spacers, sequences complementary to antecedent mobile elements, and target invading nucleic acids. CRISPR clusters are transcribed and processed into CRISPR RNA (crRNA). Acts as a dsDNA endonuclease. Involved in the integration of spacer DNA into the CRISPR cassette. The protein is CRISPR-associated endonuclease Cas1 1 of Francisella tularensis subsp. novicida (strain U112).